The sequence spans 195 residues: UPF0215 protein TGAM_0348 (195 aa).

The protein belongs to the UPF0215 family.

This is UPF0215 protein TGAM_0348 from Thermococcus gammatolerans (strain DSM 15229 / JCM 11827 / EJ3).